The primary structure comprises 358 residues: Heme A synthase (358 aa).

8 consecutive transmembrane segments (helical) span residues 25-45 (LVRY…MVGG), 111-131 (LLAR…WLTG), 141-161 (MLGL…MVAS), 176-196 (IHLT…RGLV), 210-230 (FAGW…LVAG), 269-289 (VQFV…LHAV), 304-324 (TIVL…TLLM), and 326-346 (APLH…AFAV). Position 273 (His273) interacts with heme. His334 is a binding site for heme.

It belongs to the COX15/CtaA family. Type 2 subfamily. As to quaternary structure, interacts with CtaB. Requires heme b as cofactor.

It is found in the cell membrane. It catalyses the reaction Fe(II)-heme o + 2 A + H2O = Fe(II)-heme a + 2 AH2. Its pathway is porphyrin-containing compound metabolism; heme A biosynthesis; heme A from heme O: step 1/1. Functionally, catalyzes the conversion of heme O to heme A by two successive hydroxylations of the methyl group at C8. The first hydroxylation forms heme I, the second hydroxylation results in an unstable dihydroxymethyl group, which spontaneously dehydrates, resulting in the formyl group of heme A. In Brucella suis (strain ATCC 23445 / NCTC 10510), this protein is Heme A synthase.